The chain runs to 1143 residues: DNA polymerase III subunit alpha (1143 aa).

Belongs to the DNA polymerase type-C family. DnaE subfamily. As to quaternary structure, DNA polymerase III contains a core (composed of alpha, epsilon and theta chains) that associates with a tau subunit. This core dimerizes to form the PolIII' complex. PolIII' associates with the gamma complex (composed of gamma, delta, delta', psi and chi chains) and with the beta chain to form the complete DNA polymerase III complex.

The protein resides in the cytoplasm. It carries out the reaction DNA(n) + a 2'-deoxyribonucleoside 5'-triphosphate = DNA(n+1) + diphosphate. In terms of biological role, DNA polymerase III is a complex, multichain enzyme responsible for most of the replicative synthesis in bacteria. This DNA polymerase also exhibits 3' to 5' exonuclease activity. The alpha chain is the DNA polymerase. The chain is DNA polymerase III subunit alpha (dnaE1) from Caulobacter vibrioides (strain NA1000 / CB15N) (Caulobacter crescentus).